We begin with the raw amino-acid sequence, 744 residues long: MNRTDPPITPELVASHGLKPDEYERILKLIGRVPTFTELGIFSAMWNEHCSYKSSRIHLRGLPTKAPWVIQGPGENAGVIDIGDGQAVVFKMESHNHPSYIEPYQGATTGVGGILRDVFTMGARPIACLNALSFGDPSHPKTRHLVGGVVAGVGGYGNSFGVPTVGGQVRFHTRYDGNILVNAMAVGLADADKIFYAAASGVNMPIVYLGSKTGRDGIHGATMASAEFDDDSAEKRPTVQVGDPFAEKLLLEACLEIMETDCVIAIQDMGAAGLTCSAVEMGAKGDLGVDLDLDSVPTREQGMSAYEMMLSESQERMLMVLKPEKEKEAEAIFRKWGLDFAIVGYTTPSQRFVVKHGGDVMVDLPIKELESEAPLYDRPHVPSPQLPVVHARDVAPRLPVADALEKLIATPELCSKRWVWEQYDHVIGGNTVQRPGGDAAVVRVEDGPKGLALTVDVTPRYCEADPFEGGKQAVAEAWRNITAVGGRPLAITDNLNFGNPERPEIMGQFVGCLKGIAAACTALDFPVVSGNVSLYNETNGRGILPTPSIGGVGLLDDFTQSASLAFKAEGECILLIGETQGWLGQSVYLRDVCGREEGAPPPVDLAAEKRNGDVVRGMIHAGTVTAVHDISDGGLLVALAEMAMAGGIGAALDAAPEAIVPHAWWFGEDQARYIVTVHEKDLLSVFTKLKAVEVPCVQIGLTGGHEIAIAGERAVHVKALQHGFESWLPDYMAGRVETSGIPDR.

Residue histidine 49 is part of the active site. ATP is bound by residues tyrosine 52 and lysine 91. A Mg(2+)-binding site is contributed by glutamate 93. Substrate-binding positions include 94–97 (SHNH) and arginine 116. The Proton acceptor role is filled by histidine 95. Mg(2+) is bound at residue aspartate 117. Residue glutamine 240 coordinates substrate. Aspartate 268 is a Mg(2+) binding site. 312–314 (ESQ) is a substrate binding site. 2 residues coordinate ATP: aspartate 493 and glycine 530. Asparagine 531 provides a ligand contact to Mg(2+). Substrate is bound at residue serine 533.

It belongs to the FGAMS family. Monomer. Part of the FGAM synthase complex composed of 1 PurL, 1 PurQ and 2 PurS subunits.

Its subcellular location is the cytoplasm. The catalysed reaction is N(2)-formyl-N(1)-(5-phospho-beta-D-ribosyl)glycinamide + L-glutamine + ATP + H2O = 2-formamido-N(1)-(5-O-phospho-beta-D-ribosyl)acetamidine + L-glutamate + ADP + phosphate + H(+). The protein operates within purine metabolism; IMP biosynthesis via de novo pathway; 5-amino-1-(5-phospho-D-ribosyl)imidazole from N(2)-formyl-N(1)-(5-phospho-D-ribosyl)glycinamide: step 1/2. Part of the phosphoribosylformylglycinamidine synthase complex involved in the purines biosynthetic pathway. Catalyzes the ATP-dependent conversion of formylglycinamide ribonucleotide (FGAR) and glutamine to yield formylglycinamidine ribonucleotide (FGAM) and glutamate. The FGAM synthase complex is composed of three subunits. PurQ produces an ammonia molecule by converting glutamine to glutamate. PurL transfers the ammonia molecule to FGAR to form FGAM in an ATP-dependent manner. PurS interacts with PurQ and PurL and is thought to assist in the transfer of the ammonia molecule from PurQ to PurL. In Nitrobacter hamburgensis (strain DSM 10229 / NCIMB 13809 / X14), this protein is Phosphoribosylformylglycinamidine synthase subunit PurL.